Reading from the N-terminus, the 414-residue chain is Patatin-like protein 1 (414 aa).

The PNPLA domain occupies 22 to 228 (LSLDGGGVRG…TANNPTLVAM (207 aa)). A GXGXXG motif is present at residues 26–31 (GGGVRG). The short motif at 64–68 (GTSTG) is the GXSXG element. Ser66 serves as the catalytic Nucleophile. The active-site Proton acceptor is the Asp215. The DGA/G signature appears at 215–217 (DGA). Residue Ser399 is modified to Phosphoserine.

The protein belongs to the patatin family. Post-translationally, phosphorylated at Ser-399 by CPK3. Phosphorylation enhances PLP1 activity towards phosphatidylcholine. As to expression, expressed specifically in roots and root hairs.

It is found in the cytoplasm. Possesses non-specific lipolytic acyl hydrolase (LAH) activity. Catalyzes the hydrolysis of the neutral lipids monogalactosyldiacylglycerol (MGDG), digalactosyldiacylglycerol (DGDG) and phosphatidylglycerol (PG), and less efficiently the polar lipids phosphatidylcholine (PC) and phosphatidylinositol (PI), but not the storage lipid triacylglycerol (TAG). May play a role in root development. This is Patatin-like protein 1 (PLP1) from Arabidopsis thaliana (Mouse-ear cress).